The sequence spans 376 residues: Ribosomal RNA large subunit methyltransferase G (376 aa).

It belongs to the methyltransferase superfamily. RlmG family.

It localises to the cytoplasm. It catalyses the reaction guanosine(1835) in 23S rRNA + S-adenosyl-L-methionine = N(2)-methylguanosine(1835) in 23S rRNA + S-adenosyl-L-homocysteine + H(+). Its function is as follows. Specifically methylates the guanine in position 1835 (m2G1835) of 23S rRNA. This chain is Ribosomal RNA large subunit methyltransferase G, found in Klebsiella pneumoniae subsp. pneumoniae (strain ATCC 700721 / MGH 78578).